The chain runs to 1362 residues: MSLHSKKSTSTVKDNEHSLDLSIKSIPSNEKNFSTEKSENEASESHVVDVVKDPFEQYTPEEQEILYKQINDTPAKLSGYPRILSYADKWDIMLQLAGTITGIGAGLGMPLMSLVSGQLAQAFTDLASGKGASSFQHTVDHFCLYFIYIAIGVFGCSYIYTVTFIIAGERIARRIRQDYLHAILSQNIGYFDRLGAGEITTRITTDTNFIQDGLGEKVGLVFFAIATFVSGFVIAFIRHWKFTLILSSMFPAICGGIGLGVPFITKNTKGQIAVVAESSTFVEEVFSNIRNAFAFGTQDILAKLYNKYLITAQRFGINKAIAMGLMVGWMFFVAYGVYGLAFWEGGRLLHAGDLDVSKLIGCFFAVLIASYSLANISPKMQSFVSCASAAKKIFDTIDRVSPINAFTPTGDVVKDIKGEIELKNIRFVYPTRPEVLVLDNFSLVCPSGKITALVGASGSGKSTIIGLVERFYDPIGGQVFLDGKDLRTLNVASLRNQISLVQQEPVLFATTVFENITYGLPDTIKGTLSKEELERRVYDAAKLANAYDFIMTLPEQFSTNVGQRGFLMSGGQKQRIAIARAVISDPKILLLDEATSALDSKSEVLVQKALDNASRSRTTIVIAHRLSTIRNADNIVVVNAGKIVEQGSHNELLDLNGAYARLVEAQKLSGGEKDQEMVEEELEDAPREIPITSFGDDDEDNDMASLEAPMMSHNTDTDTLNNKLNEKDNVVFEDKTLQHVASEIVPNLPPADVGELNEEPKKSKKSKKNNHEINSLTALWFIHSFVRTMIEIICLLIGILASMICGAAYPVQAAVFARFLNIFTDLSSTDFLHKVNVFAVYWLILAIVQFFAYAISNFAMTYAMEAVLQRIRYHLFRTLLRQDVEFFDRSENTVGAITTSLSTKIQSLEGLSGPTLGTFFQILTNIISVTILSLATGWKLGLVTLSTSPVIITAGYYRVRALDQVQEKLSAAYKESAAFACESTSAIRTVASLNREENVFAEYCDSLIKPGRESAIASLKSGLFFSAAQGVTFLINALTFWYGSTLMRKGEYNIVQFYTCFIAIVFGIQQAGQFFGYSADVTKAKAAAGEIKYLSESKPKIDTWSTEGKKVESLQSAAIEFRQVEFSYPTRRHIKVLRGLNLTVKPGQFVAFVGSSGCGKSTTIGLIERFYDCDNGAVLVDGVNVRDYNINDYRKQIALVSQEPTLYQGTVRENIVLGASKDVSEEEMIEACKKANIHEFILGLPNGYNTLCGQKGSSLSGGQKQRIAIARALIRNPKILLLDEATSALDSHSEKVVQEALNAASQGRTTVAIAHRLSSIQDADCIFVFDGGVIAEAGTHAELVKQRGRYYELVVEQGLNKA.

The segment at 1 to 45 is disordered; the sequence is MSLHSKKSTSTVKDNEHSLDLSIKSIPSNEKNFSTEKSENEASES. Residues 1–91 are Cytoplasmic-facing; that stretch reads MSLHSKKSTS…RILSYADKWD (91 aa). Positions 33–45 are enriched in basic and acidic residues; the sequence is FSTEKSENEASES. 6 helical membrane-spanning segments follow: residues 92 to 115, 138 to 162, 220 to 237, 244 to 264, 320 to 346, and 354 to 374; these read IMLQLAGTITGIGAGLGMPLMSLV, TVDHFCLYFIYIAIGVFGCSYIYTV, LVFFAIATFVSGFVIAFI, LILSSMFPAICGGIGLGVPFI, AIAMGLMVGWMFFVAYGVYGLAFWEGG, and LDVSKLIGCFFAVLIASYSLA. The region spanning 95 to 385 is the ABC transmembrane type-1 1 domain; sequence QLAGTITGIG…ISPKMQSFVS (291 aa). Over 375 to 788 the chain is Cytoplasmic; sequence NISPKMQSFV…LWFIHSFVRT (414 aa). Positions 420 to 665 constitute an ABC transporter 1 domain; sequence IELKNIRFVY…NGAYARLVEA (246 aa). 455–462 contributes to the ATP binding site; sequence GASGSGKS. The disordered stretch occupies residues 748–768; sequence LPPADVGELNEEPKKSKKSKK. A run of 6 helical transmembrane segments spans residues 789–809, 835–859, 916–935, 940–957, 1022–1040, and 1054–1072; these read MIEIICLLIGILASMICGAAY, VNVFAVYWLILAIVQFFAYAISNFA, LGTFFQILTNIISVTILSLA, LGLVTLSTSPVIITAGYY, GLFFSAAQGVTFLINALTF, and IVQFYTCFIAIVFGIQQAG. The ABC transmembrane type-1 2 domain maps to 795–1083; the sequence is LLIGILASMI…FFGYSADVTK (289 aa). Residues 1073–1362 are Cytoplasmic-facing; the sequence is QFFGYSADVT…LVVEQGLNKA (290 aa). An ABC transporter 2 domain is found at 1119-1356; that stretch reads IEFRQVEFSY…RGRYYELVVE (238 aa). 1154–1161 provides a ligand contact to ATP; sequence GSSGCGKS.

Belongs to the ABC transporter superfamily. ABCB family. Multidrug resistance exporter (TC 3.A.1.201) subfamily.

It is found in the membrane. In terms of biological role, may be a transmembrane transporter of the mating factor, namely P-factor or M-factor. Confers resistance to leptomycin B and to several other antifungal drugs. This Schizosaccharomyces pombe (strain 972 / ATCC 24843) (Fission yeast) protein is Leptomycin B resistance protein pmd1 (pmd1).